Here is a 441-residue protein sequence, read N- to C-terminus: G-protein coupled receptor family C group 5 member C (441 aa).

Residues 1–23 (MAIHKALVMCLGLPLFLFPGAWA) form the signal peptide. The Extracellular segment spans residues 24-50 (QGHVPPGCSQGLNPLYYNLCDRSGAWG). A helical transmembrane segment spans residues 51–71 (IVLEAVAGAGIVTTFVLTIIL). Residues 72–85 (VASLPFVQDTKKRS) are Cytoplasmic-facing. A helical membrane pass occupies residues 86–106 (LLGTQVFFLLGTLGLFCLVFA). At 107-120 (CVVKPDFSTCASRR) the chain is on the extracellular side. Residues 121–141 (FLFGVLFAICFSCLAAHVFAL) form a helical membrane-spanning segment. Residues 142–155 (NFLARKNHGPRGWV) are Cytoplasmic-facing. The helical transmembrane segment at 156-176 (IFTVALLLTLVEVIINTEWLI) threads the bilayer. The Extracellular segment spans residues 177–208 (ITLVRGSGEGGPQGNSSAGWAVASPCAIANMD). N-linked (GlcNAc...) asparagine glycosylation is present at Asn-191. The helical transmembrane segment at 209–229 (FVMALIYVMLLLLGAFLGAWP) threads the bilayer. At 230–241 (ALCGRYKRWRKH) the chain is on the cytoplasmic side. Residues 242-262 (GVFVLLTTATSVAIWVVWIVM) traverse the membrane as a helical segment. Residues 263 to 279 (YTYGNKQHNSPTWDDPT) lie on the Extracellular side of the membrane. A helical membrane pass occupies residues 280-300 (LAIALAANAWAFVLFYVIPEV). Topologically, residues 301-441 (SQVTKSSPEQ…QVFRNPYVWD (141 aa)) are cytoplasmic. Phosphoserine is present on residues Ser-344, Ser-383, Ser-403, and Ser-406. The interval 412-441 (DMYSAQSHQAATPPKDGKNSQVFRNPYVWD) is disordered. Phosphotyrosine is present on Tyr-414. Phosphothreonine is present on Thr-423.

Belongs to the G-protein coupled receptor 3 family. Expression is highest in the periphery, particularly in the stomach, but also in the kidney, liver, pancreas, and prostate. In brain, levels of expression are generally lower than in the periphery, with the exception of cerebellum, spinal cord, and dorsal root ganglia (DRG).

It is found in the cell membrane. The protein localises to the cytoplasmic vesicle membrane. This retinoic acid-inducible G-protein coupled receptor provide evidence for a possible interaction between retinoid and G-protein signaling pathways. This chain is G-protein coupled receptor family C group 5 member C (GPRC5C), found in Homo sapiens (Human).